We begin with the raw amino-acid sequence, 251 residues long: Imidazole glycerol phosphate synthase subunit HisF (251 aa).

Catalysis depends on residues Asp11 and Asp130.

Belongs to the HisA/HisF family. Heterodimer of HisH and HisF.

It localises to the cytoplasm. The enzyme catalyses 5-[(5-phospho-1-deoxy-D-ribulos-1-ylimino)methylamino]-1-(5-phospho-beta-D-ribosyl)imidazole-4-carboxamide + L-glutamine = D-erythro-1-(imidazol-4-yl)glycerol 3-phosphate + 5-amino-1-(5-phospho-beta-D-ribosyl)imidazole-4-carboxamide + L-glutamate + H(+). Its pathway is amino-acid biosynthesis; L-histidine biosynthesis; L-histidine from 5-phospho-alpha-D-ribose 1-diphosphate: step 5/9. IGPS catalyzes the conversion of PRFAR and glutamine to IGP, AICAR and glutamate. The HisF subunit catalyzes the cyclization activity that produces IGP and AICAR from PRFAR using the ammonia provided by the HisH subunit. This Chlorobium phaeobacteroides (strain DSM 266 / SMG 266 / 2430) protein is Imidazole glycerol phosphate synthase subunit HisF.